The chain runs to 347 residues: Aspartate-semialdehyde dehydrogenase (347 aa).

Residues 10–13 and 37–38 contribute to the NADP(+) site; these read TGMV and RS. Position 108 (Arg-108) interacts with phosphate. Cys-147 acts as the Acyl-thioester intermediate in catalysis. Gln-174 is a binding site for substrate. 177-178 is an NADP(+) binding site; sequence SG. Glu-200 contacts substrate. Position 203 (Lys-203) interacts with phosphate. Residue Arg-233 coordinates substrate. His-240 acts as the Proton acceptor in catalysis. Residues 276–299 form a disordered region; the sequence is APEKPVVVRDEENRPQPRMDRDMD. Residues 281 to 299 show a composition bias toward basic and acidic residues; that stretch reads VVVRDEENRPQPRMDRDMD. 327-328 is a binding site for NADP(+); the sequence is NT.

This sequence belongs to the aspartate-semialdehyde dehydrogenase family. Homodimer.

It carries out the reaction L-aspartate 4-semialdehyde + phosphate + NADP(+) = 4-phospho-L-aspartate + NADPH + H(+). It participates in amino-acid biosynthesis; L-lysine biosynthesis via DAP pathway; (S)-tetrahydrodipicolinate from L-aspartate: step 2/4. It functions in the pathway amino-acid biosynthesis; L-methionine biosynthesis via de novo pathway; L-homoserine from L-aspartate: step 2/3. Its pathway is amino-acid biosynthesis; L-threonine biosynthesis; L-threonine from L-aspartate: step 2/5. Its function is as follows. Catalyzes the NADPH-dependent formation of L-aspartate-semialdehyde (L-ASA) by the reductive dephosphorylation of L-aspartyl-4-phosphate. The sequence is that of Aspartate-semialdehyde dehydrogenase from Methanothermobacter thermautotrophicus (strain ATCC 29096 / DSM 1053 / JCM 10044 / NBRC 100330 / Delta H) (Methanobacterium thermoautotrophicum).